Here is a 265-residue protein sequence, read N- to C-terminus: Pre-mRNA-splicing factor cwf15 (265 aa).

2 disordered regions span residues 1–31 and 62–197; these read MTTA…ALPA and AAHF…ALEQ. Acidic residues predominate over residues 113-125; it reads EADEDASDSDDSV. Positions 143–155 are enriched in low complexity; the sequence is SNSQESVDSSNSE. Positions 155–205 form a coiled coil; it reads ESSDEESDSEDETQQLLRELENIKQERKREQMLQEEKNRALEQEKREREIA. The span at 156 to 167 shows a compositional bias: acidic residues; the sequence is SSDEESDSEDET. Residues 172-197 show a composition bias toward basic and acidic residues; sequence RELENIKQERKREQMLQEEKNRALEQ.

This sequence belongs to the CWC15 family. Belongs to the 40S cdc5-associated complex (or cwf complex), a spliceosome sub-complex reminiscent of a late-stage spliceosome composed of the U2, U5 and U6 snRNAs and at least brr2, cdc5, cwf2/prp3, cwf3/syf1, cwf4/syf3, cwf5/ecm2, spp42/cwf6, cwf7/spf27, cwf8, cwf9, cwf10, cwf11, cwf12, prp45/cwf13, cwf14, cwf15, cwf16, cwf17, cwf18, cwf19, cwf20, cwf21, cwf22, cwf23, cwf24, cwf25, cwf26, cyp7/cwf27, cwf28, cwf29/ist3, lea1, msl1, prp5/cwf1, prp10, prp12/sap130, prp17, prp22, sap61, sap62, sap114, sap145, slu7, smb1, smd1, smd3, smf1, smg1 and syf2.

It localises to the nucleus. In terms of biological role, involved in pre-mRNA splicing. The protein is Pre-mRNA-splicing factor cwf15 (cwf15) of Schizosaccharomyces pombe (strain 972 / ATCC 24843) (Fission yeast).